We begin with the raw amino-acid sequence, 128 residues long: Small ribosomal subunit protein eS8 (128 aa).

Belongs to the eukaryotic ribosomal protein eS8 family. As to quaternary structure, part of the 30S ribosomal subunit.

In Methanococcus maripaludis (strain C5 / ATCC BAA-1333), this protein is Small ribosomal subunit protein eS8.